Consider the following 78-residue polypeptide: UPF0335 protein A1E_00570 (78 aa).

The protein belongs to the UPF0335 family.

The polypeptide is UPF0335 protein A1E_00570 (Rickettsia canadensis (strain McKiel)).